The sequence spans 91 residues: Small ribosomal subunit protein uS19 (91 aa).

It belongs to the universal ribosomal protein uS19 family.

Functionally, protein S19 forms a complex with S13 that binds strongly to the 16S ribosomal RNA. This is Small ribosomal subunit protein uS19 from Erythrobacter litoralis (strain HTCC2594).